Reading from the N-terminus, the 853-residue chain is Rod cGMP-specific 3',5'-cyclic phosphodiesterase subunit beta (853 aa).

The residue at position 2 (Ser2) is an N-acetylserine. 2 consecutive GAF domains span residues 71 to 220 (NMER…TLNL) and 252 to 429 (DIER…GWSV). The 334-residue stretch at 481–814 (EEDELGKILK…KEWKALADEY (334 aa)) folds into the PDEase domain. The Proton donor role is filled by His557. Positions 561, 597, 598, and 718 each coordinate a divalent metal cation. Residue Cys850 is modified to Cysteine methyl ester. A lipid anchor (S-geranylgeranyl cysteine) is attached at Cys850. The propeptide at 851–853 (RIL) is removed in mature form.

The protein belongs to the cyclic nucleotide phosphodiesterase family. As to quaternary structure, oligomer composed of two catalytic chains (alpha and beta), an inhibitory chain (gamma) and the delta chain. It depends on a divalent metal cation as a cofactor.

Its subcellular location is the membrane. The protein resides in the cell projection. It localises to the cilium. The protein localises to the photoreceptor outer segment. The catalysed reaction is 3',5'-cyclic GMP + H2O = GMP + H(+). Functionally, necessary for the formation of a functional phosphodiesterase holoenzyme. Involved in retinal circadian rhythm photoentrainment via modulation of UVA and orange light-induced phase-shift of the retina clock. May participate in processes of transmission and amplification of the visual signal. Its function is as follows. Rod-specific cGMP phosphodiesterase that catalyzes the hydrolysis of 3',5'-cyclic GMP. Necessary for the formation of a functional phosphodiesterase holoenzyme. Involved in retinal circadian rhythm photoentrainment via modulation of UVA and orange light-induced phase-shift of the retina clock. May participate in processes of transmission and amplification of the visual signal. This chain is Rod cGMP-specific 3',5'-cyclic phosphodiesterase subunit beta (PDE6B), found in Bos taurus (Bovine).